The sequence spans 836 residues: Tuftelin-interacting protein 11 (836 aa).

Positions 1–13 (MSLSHLYRDGEGH) are enriched in basic and acidic residues. Disordered stretches follow at residues 1–31 (MSLS…DWDL), 54–73 (WAER…RARD), and 85–136 (LKKG…AGGT). The tract at residues 1-50 (MSLSHLYRDGEGHMDDDEDERENFEITDWDLQNEFNPNRQRHWQTKEEAT) is required for interaction with DHX15. Phosphoserine is present on Ser2. A compositionally biased stretch (acidic residues) spans 14–28 (MDDDEDERENFEITD). Over residues 54 to 64 (WAERDSDEERP) the composition is skewed to basic and acidic residues. Phosphoserine occurs at positions 59 and 98. The segment covering 91–102 (EEAELEDSDDEE) has biased composition (acidic residues). A compositionally biased stretch (basic and acidic residues) spans 103–116 (KPVKQDEFPKDFGP). Residue Ser144 is modified to Phosphoserine. The G-patch domain maps to 149-195 (TKGIGQKLLQKMGYVPGRGLGKNAQGIINPIEAKQRKGKGAVGAYGS). Residues 183–236 (QRKGKGAVGAYGSERTTQSLQDFPVVDSEEEAEEEFQKELSQWRKDPSGSKKKP) form a disordered region. Ser210 carries the post-translational modification Phosphoserine. Over residues 217–231 (EFQKELSQWRKDPSG) the composition is skewed to basic and acidic residues. The short motif at 699–704 (VKDKFN) is the Nuclear localization signal element. The segment at 709 to 733 (IMNRAVSSNVGAYMQPGARENIAYL) is required for nuclear speckle localization.

This sequence belongs to the TFP11/STIP family. As to quaternary structure, identified in the spliceosome C complex. Found in the Intron Large (IL) complex, a post-mRNA release spliceosomal complex containing the excised intron, U2, U5 and U6 snRNPs, and splicing factors. Interacts with TUFT1. Interacts with DHX15; indicative for a recruitment of DHX15 to the IL complex. Interacts with GCFC2.

The protein resides in the cytoplasm. Its subcellular location is the nucleus. Involved in pre-mRNA splicing, specifically in spliceosome disassembly during late-stage splicing events. Intron turnover seems to proceed through reactions in two lariat-intron associated complexes termed Intron Large (IL) and Intron Small (IS). In cooperation with DHX15 seems to mediate the transition of the U2, U5 and U6 snRNP-containing IL complex to the snRNP-free IS complex leading to efficient debranching and turnover of excised introns. May play a role in the differentiation of ameloblasts and odontoblasts or in the forming of the enamel extracellular matrix. The protein is Tuftelin-interacting protein 11 (TFIP11) of Sus scrofa (Pig).